Consider the following 399-residue polypeptide: F-box/kelch-repeat protein At5g48980 (399 aa).

Polar residues predominate over residues 1-11; the sequence is MADSQRLSTAS. Residues 1-29 are disordered; sequence MADSQRLSTASGVKDGQPPWKKKKLSNDT. Residues 29-75 form the F-box domain; that stretch reads TTSNPSLPYDVILIILARVSRSYYTNLSLVSKSFRSILTSPELYKTR. One copy of the Kelch repeat lies at 199 to 248; it reads IVYLPGSFESPDSLNCVEVYNTMTQTWKPVPPEKRMFKLENLEKKIYYKS.

This chain is F-box/kelch-repeat protein At5g48980, found in Arabidopsis thaliana (Mouse-ear cress).